Consider the following 1368-residue polypeptide: Inactive tyrosine-protein kinase PRAG1 (1368 aa).

Residues 200–236 form a disordered region; that stretch reads CLKGPRPCTSPQPLRESLPSEDDSDQRCSPSGDSEGG. The residue at position 238 (Tyr238) is a Phosphotyrosine; by CSK. A disordered region spans residues 297–330; the sequence is STANPPHLGPKKPSLNSEAASSSDGLSCGSSRSG. The segment covering 317–330 has biased composition (low complexity); sequence SSSDGLSCGSSRSG. Tyr343 and Tyr391 each carry phosphotyrosine; by CSK. 3 disordered regions span residues 392 to 443, 499 to 605, and 636 to 792; these read AESA…PNAA, LSSR…GAWS, and HSNS…KKIV. Residues 414–434 show a composition bias toward polar residues; sequence VSSGQVWTGDTWSQKTPSGWS. The segment covering 502 to 518 has biased composition (basic and acidic residues); sequence RESHPHNMTENSSKEKP. 2 stretches are compositionally biased toward low complexity: residues 522 to 535 and 550 to 563; these read PKLSKSSPGGSPVS and SGSSVGSQPSSRVP. 2 stretches are compositionally biased toward polar residues: residues 564 to 574 and 652 to 666; these read TNLTSSCQTNG and SGQNGKTNSGMSKSA. 2 positions are modified to phosphoserine: Ser667 and Ser716. Polar residues-rich tracts occupy residues 707 to 717 and 725 to 741; these read VSQSSAESLSP and SFTTGSTDSLASDSRTC. Ser753 and Ser797 each carry phosphoserine. Disordered regions lie at residues 799-818 and 873-901; these read PDGFFWTQGSPKPRTASPKL and NSKGGCGSPNLQGRAATSTSSSQLSVSSQ. Residues 887-901 show a composition bias toward low complexity; sequence AATSTSSSQLSVSSQ. Residues 906 to 949 are required for homodimerization; that stretch reads SSQLQLHSLLSSISSKEGTYAKLGGLYTQSLARLVTKCEDLFMG. Residues 940 to 1291 form the Protein kinase domain; sequence VTKCEDLFMG…EAKRVLQCLL (352 aa). Polar residues predominate over residues 1134-1144; that stretch reads SSPGPSANPSV. Positions 1134-1166 are disordered; it reads SSPGPSANPSVPTTTSRCPSAAPAATTACQGGP. Over residues 1145-1162 the composition is skewed to low complexity; the sequence is PTTTSRCPSAAPAATTAC. The required for homodimerization stretch occupies residues 1293–1368; that stretch reads GPRRELVEQP…LQSLKLLQLL (76 aa).

The protein belongs to the protein kinase superfamily. In terms of assembly, homodimer. Dimerization leads to the catalytic activation of CSK. Interacts (via C-terminus) with RND2. Interacts with CSK (via SH2 domain) in a Tyr-391 phosphorylation-dependent manner; this interaction potentiates kinase activity of CSK. Interacts with NOTCH1 intracellular domain (N1ICD). Forms a complex with N1ICD and MAML1, in a MAML1-dependent manner. Phosphorylated by CSK on Tyr-238, Tyr-343, and Tyr-391; Tyr-391 is a primary site of phosphorylation. As to expression, highly-expressed in brain, including cortical and hippocampal pyramidal neurons, as well as in kidney, spleen, colon and small intestine.

The protein localises to the cytoplasm. It is found in the nucleus. It localises to the cell junction. Its subcellular location is the focal adhesion. Its function is as follows. Catalytically inactive protein kinase that acts as a scaffold protein. Functions as an effector of the small GTPase RND2, which stimulates RhoA activity and inhibits NGF-induced neurite outgrowth. Promotes Src family kinase (SFK) signallig by regulating the subcellular localization of CSK, a negative regulator of these kinases, leading to the regulation of cell morphology and motility by a CSK-dependent mechanism. Acts as a critical coactivator of Notch signaling. In Rattus norvegicus (Rat), this protein is Inactive tyrosine-protein kinase PRAG1.